The chain runs to 167 residues: Endoribonuclease YbeY (167 aa).

Histidine 132, histidine 136, and histidine 142 together coordinate Zn(2+).

It belongs to the endoribonuclease YbeY family. Requires Zn(2+) as cofactor.

The protein resides in the cytoplasm. Its function is as follows. Single strand-specific metallo-endoribonuclease involved in late-stage 70S ribosome quality control and in maturation of the 3' terminus of the 16S rRNA. This is Endoribonuclease YbeY from Clostridium beijerinckii (strain ATCC 51743 / NCIMB 8052) (Clostridium acetobutylicum).